Consider the following 930-residue polypeptide: Translation initiation factor IF-2 (930 aa).

Residues 51–325 (PGAGKSAAKP…TREIGGVKVP (275 aa)) are disordered. Composition is skewed to low complexity over residues 56-111 (SAAK…KPGV) and 121-162 (TPAA…GNNP). Over residues 263 to 295 (RPGGGPGGGPGRPGGPGGRGGRGNAQGAFGRGG) the composition is skewed to gly residues. The span at 296 to 307 (GPRKGRKSKRAK) shows a compositional bias: basic residues. Basic and acidic residues predominate over residues 308–320 (RQEFEQQHTREIG). A tr-type G domain is found at 422–596 (PRPAVVTVMG…LTADAALELT (175 aa)). Residues 431-438 (GHVDHGKT) form a G1 region. 431-438 (GHVDHGKT) lines the GTP pocket. The tract at residues 456–460 (GITQH) is G2. The tract at residues 481 to 484 (DTPG) is G3. GTP is bound by residues 481 to 485 (DTPGH) and 535 to 538 (NKID). Residues 535-538 (NKID) are G4. Positions 571-573 (SAR) are G5.

Belongs to the TRAFAC class translation factor GTPase superfamily. Classic translation factor GTPase family. IF-2 subfamily.

Its subcellular location is the cytoplasm. One of the essential components for the initiation of protein synthesis. Protects formylmethionyl-tRNA from spontaneous hydrolysis and promotes its binding to the 30S ribosomal subunits. Also involved in the hydrolysis of GTP during the formation of the 70S ribosomal complex. The polypeptide is Translation initiation factor IF-2 (Micrococcus luteus (strain ATCC 4698 / DSM 20030 / JCM 1464 / CCM 169 / CCUG 5858 / IAM 1056 / NBRC 3333 / NCIMB 9278 / NCTC 2665 / VKM Ac-2230) (Micrococcus lysodeikticus)).